Reading from the N-terminus, the 642-residue chain is Putative ankyrin repeat protein L91 (642 aa).

14 ANK repeats span residues 42-76 (HFTK…VKNP), 85-118 (EGWT…NPNI), 153-186 (NGFT…NVDS), 190-224 (NGET…TLHK), 227-256 (NGFT…DVNA), 260-288 (EGKS…EINH), 292-322 (NDIN…NPNE), 326-360 (NKNA…NPNI), 365-397 (SRTI…NVNA), 401-434 (EGRT…NVNH), 438-470 (DGAH…DVNI), 475-514 (KKWT…NVNA), 518-550 (YGNN…NVNH), and 554-587 (NGDT…NPNI).

The polypeptide is Putative ankyrin repeat protein L91 (Acanthamoeba polyphaga (Amoeba)).